The sequence spans 277 residues: ATP synthase subunit a (277 aa).

Helical transmembrane passes span 40-60 (AWHV…LIIF), 98-118 (SALI…MNLM), 154-174 (DLNL…FYSI), 219-239 (LFGN…IGYF), and 245-265 (FMWA…FMML).

This sequence belongs to the ATPase A chain family. In terms of assembly, F-type ATPases have 2 components, CF(1) - the catalytic core - and CF(0) - the membrane proton channel. CF(1) has five subunits: alpha(3), beta(3), gamma(1), delta(1), epsilon(1). CF(0) has three main subunits: a(1), b(2) and c(9-12). The alpha and beta chains form an alternating ring which encloses part of the gamma chain. CF(1) is attached to CF(0) by a central stalk formed by the gamma and epsilon chains, while a peripheral stalk is formed by the delta and b chains.

The protein resides in the cell inner membrane. Its function is as follows. Key component of the proton channel; it plays a direct role in the translocation of protons across the membrane. In Alteromonas mediterranea (strain DSM 17117 / CIP 110805 / LMG 28347 / Deep ecotype), this protein is ATP synthase subunit a.